A 273-amino-acid polypeptide reads, in one-letter code: Ethanolamine ammonia-lyase small subunit (273 aa).

Positions 164, 185, and 214 each coordinate adenosylcob(III)alamin.

Belongs to the EutC family. In terms of assembly, the basic unit is a heterodimer which dimerizes to form tetramers. The heterotetramers trimerize; 6 large subunits form a core ring with 6 small subunits projecting outwards. Adenosylcob(III)alamin is required as a cofactor.

The protein resides in the bacterial microcompartment. The enzyme catalyses ethanolamine = acetaldehyde + NH4(+). Its pathway is amine and polyamine degradation; ethanolamine degradation. In terms of biological role, catalyzes the deamination of various vicinal amino-alcohols to oxo compounds. Allows this organism to utilize ethanolamine as the sole source of nitrogen and carbon in the presence of external vitamin B12. The polypeptide is Ethanolamine ammonia-lyase small subunit (Pseudomonas aeruginosa (strain LESB58)).